A 173-amino-acid polypeptide reads, in one-letter code: MPAPQKDGPRANRDIRGVRDVQLIDQDGQNRGVVPFFDALAMAEEVGLDLVEIAPNSVPPVCKFLDYGRFRFNEQKKQNEARKRQKTVEVKEIKLRPGIDKHDYEVKMKAVQRFFEEGDKVKVTLRFRGREIAHQDIGLRLLERVKQETQEIAKVESEPMLEGRQMIMILAPR.

The protein belongs to the IF-3 family. In terms of assembly, monomer.

Its subcellular location is the cytoplasm. In terms of biological role, IF-3 binds to the 30S ribosomal subunit and shifts the equilibrium between 70S ribosomes and their 50S and 30S subunits in favor of the free subunits, thus enhancing the availability of 30S subunits on which protein synthesis initiation begins. The polypeptide is Translation initiation factor IF-3 (Methylorubrum extorquens (strain CM4 / NCIMB 13688) (Methylobacterium extorquens)).